Reading from the N-terminus, the 138-residue chain is Spermidine export protein MdtJ (138 aa).

The next 4 membrane-spanning stretches (helical) occupy residues 1–21 (MIYWLFLAMAIITEVIGTLSM), 30–50 (VVGMAVMYIMIATSYILLAMA), 54–74 (VALGVAYALWEGVGILFITVF), and 81–101 (ESLSLMKVGGLALLITGIMLI).

This sequence belongs to the drug/metabolite transporter (DMT) superfamily. Small multidrug resistance (SMR) (TC 2.A.7.1) family. MdtJ subfamily. In terms of assembly, forms a complex with MdtI.

It localises to the cell inner membrane. Its function is as follows. Catalyzes the excretion of spermidine. This chain is Spermidine export protein MdtJ, found in Photorhabdus laumondii subsp. laumondii (strain DSM 15139 / CIP 105565 / TT01) (Photorhabdus luminescens subsp. laumondii).